Here is a 632-residue protein sequence, read N- to C-terminus: Probable potassium transport system protein Kup 1 (632 aa).

12 consecutive transmembrane segments (helical) span residues 19-39 (LVLGAVGVVFGDIGTSPLYAL), 59-79 (VISMLFWAMIIVVSIKYVVFV), 110-130 (VLMMLGIFGACMFYGDAVITP), 146-166 (PQLSQFVIPITLMILAALFLI), 178-198 (FGPIMTAWFLALGGLGILHLV), 213-233 (ITFLVEHALQAFIVLGSVFLV), 256-276 (WFVLVMPCLMLNYFGQGAMLL), 298-318 (MVLLATCATVIASQAVISGAF), 346-366 (IYLPVINWLLLVLVIGVVISF), 373-393 (AAAYGIAVTTTMVITTILAAV), 403-423 (PALVAVVGLAFIVVDLSFFAA), and 428-448 (VAEGGWFPLLLGSAAFFLLMT).

Belongs to the HAK/KUP transporter (TC 2.A.72) family.

The protein localises to the cell inner membrane. The catalysed reaction is K(+)(in) + H(+)(in) = K(+)(out) + H(+)(out). Functionally, transport of potassium into the cell. Likely operates as a K(+):H(+) symporter. The protein is Probable potassium transport system protein Kup 1 of Cupriavidus necator (strain ATCC 17699 / DSM 428 / KCTC 22496 / NCIMB 10442 / H16 / Stanier 337) (Ralstonia eutropha).